Here is a 356-residue protein sequence, read N- to C-terminus: UDP-N-acetylglucosamine--N-acetylmuramyl-(pentapeptide) pyrophosphoryl-undecaprenol N-acetylglucosamine transferase (356 aa).

UDP-N-acetyl-alpha-D-glucosamine contacts are provided by R166, S196, and Q290.

Belongs to the glycosyltransferase 28 family. MurG subfamily.

It is found in the cell membrane. It carries out the reaction Mur2Ac(oyl-L-Ala-gamma-D-Glu-L-Lys-D-Ala-D-Ala)-di-trans,octa-cis-undecaprenyl diphosphate + UDP-N-acetyl-alpha-D-glucosamine = beta-D-GlcNAc-(1-&gt;4)-Mur2Ac(oyl-L-Ala-gamma-D-Glu-L-Lys-D-Ala-D-Ala)-di-trans,octa-cis-undecaprenyl diphosphate + UDP + H(+). Its pathway is cell wall biogenesis; peptidoglycan biosynthesis. Functionally, cell wall formation. Catalyzes the transfer of a GlcNAc subunit on undecaprenyl-pyrophosphoryl-MurNAc-pentapeptide (lipid intermediate I) to form undecaprenyl-pyrophosphoryl-MurNAc-(pentapeptide)GlcNAc (lipid intermediate II). The protein is UDP-N-acetylglucosamine--N-acetylmuramyl-(pentapeptide) pyrophosphoryl-undecaprenol N-acetylglucosamine transferase of Staphylococcus aureus (strain Mu3 / ATCC 700698).